We begin with the raw amino-acid sequence, 110 residues long: Large ribosomal subunit protein uL22 (110 aa).

Belongs to the universal ribosomal protein uL22 family. As to quaternary structure, part of the 50S ribosomal subunit.

In terms of biological role, this protein binds specifically to 23S rRNA; its binding is stimulated by other ribosomal proteins, e.g. L4, L17, and L20. It is important during the early stages of 50S assembly. It makes multiple contacts with different domains of the 23S rRNA in the assembled 50S subunit and ribosome. Functionally, the globular domain of the protein is located near the polypeptide exit tunnel on the outside of the subunit, while an extended beta-hairpin is found that lines the wall of the exit tunnel in the center of the 70S ribosome. The chain is Large ribosomal subunit protein uL22 from Mannheimia succiniciproducens (strain KCTC 0769BP / MBEL55E).